Consider the following 395-residue polypeptide: Beta-1,4-galactosyltransferase 3 (395 aa).

Over 1–10 (MLRRLLERPC) the chain is Cytoplasmic. A helical; Signal-anchor for type II membrane protein membrane pass occupies residues 11 to 31 (TLALLVGSQLAVMMYLSLGGF). At 32 to 395 (RSLSALFGRD…ANHTAPRGSH (364 aa)) the chain is on the lumenal side. N-linked (GlcNAc...) asparagine glycosylation is present at N57. Cysteines 79 and 121 form a disulfide. 132–136 (PHRAR) serves as a coordination point for UDP-alpha-D-galactose. N-linked (GlcNAc...) asparagine glycosylation is present at N168. UDP-alpha-D-galactose is bound by residues 171–173 (FNR), 198–199 (VD), Y228, and W260. A disulfide bridge links C192 with C211. D199 contributes to the Mn(2+) binding site. 262 to 265 (GEDD) contacts N-acetyl-D-glucosamine. Mn(2+) is bound at residue H293. Residue 293 to 295 (HRG) participates in UDP-alpha-D-galactose binding. Position 305 (R305) interacts with N-acetyl-D-glucosamine. Residue N339 is glycosylated (N-linked (GlcNAc...) asparagine). Residues 340–395 (ITADIGTDPRGPRSPSGPRYPPGSSQAFRQEMLQRRPPARPGPLPTANHTAPRGSH) are disordered. Positions 352–364 (RSPSGPRYPPGSS) are enriched in low complexity. N-linked (GlcNAc...) asparagine glycosylation occurs at N387.

This sequence belongs to the glycosyltransferase 7 family. Mn(2+) serves as cofactor.

It is found in the golgi apparatus. Its subcellular location is the golgi stack membrane. It catalyses the reaction an N-acetyl-beta-D-glucosaminyl derivative + UDP-alpha-D-galactose = a beta-D-galactosyl-(1-&gt;4)-N-acetyl-beta-D-glucosaminyl derivative + UDP + H(+). It carries out the reaction N-acetyl-D-glucosamine + UDP-alpha-D-galactose = beta-D-galactosyl-(1-&gt;4)-N-acetyl-D-glucosamine + UDP + H(+). The catalysed reaction is a beta-D-GlcNAc-(1-&gt;3)-beta-D-Gal-(1-&gt;4)-beta-D-Glc-(1&lt;-&gt;1)-Cer(d18:1(4E)) + UDP-alpha-D-galactose = a neolactoside nLc4Cer(d18:1(4E)) + UDP + H(+). The enzyme catalyses a beta-D-glucosylceramide + UDP-alpha-D-galactose = a beta-D-galactosyl-(1-&gt;4)-beta-D-glucosyl-(1&lt;-&gt;1)-ceramide + UDP + H(+). It catalyses the reaction a neolactoside IV(3)-beta-GlcNAc-nLc4Cer + UDP-alpha-D-galactose = a neolactoside nLc6Cer + UDP + H(+). The protein operates within protein modification; protein glycosylation. Responsible for the synthesis of complex-type N-linked oligosaccharides in many glycoproteins as well as the carbohydrate moieties of glycolipids. This chain is Beta-1,4-galactosyltransferase 3, found in Mus musculus (Mouse).